We begin with the raw amino-acid sequence, 174 residues long: Xanthine-guanine phosphoribosyltransferase (174 aa).

5-phospho-alpha-D-ribose 1-diphosphate contacts are provided by residues 49–50 (RG) and 108–116 (DDLVDTGAT). Residue Asp109 participates in Mg(2+) binding. Residues Asp112 and Ile155 each contribute to the guanine site. Residues Asp112 and Ile155 each contribute to the xanthine site. Residues 112 to 116 (DTGAT) and 154 to 155 (WI) contribute to the GMP site.

It belongs to the purine/pyrimidine phosphoribosyltransferase family. XGPT subfamily. As to quaternary structure, homotetramer. The cofactor is Mg(2+).

The protein localises to the cell inner membrane. It carries out the reaction GMP + diphosphate = guanine + 5-phospho-alpha-D-ribose 1-diphosphate. The catalysed reaction is XMP + diphosphate = xanthine + 5-phospho-alpha-D-ribose 1-diphosphate. The enzyme catalyses IMP + diphosphate = hypoxanthine + 5-phospho-alpha-D-ribose 1-diphosphate. It participates in purine metabolism; GMP biosynthesis via salvage pathway; GMP from guanine: step 1/1. The protein operates within purine metabolism; XMP biosynthesis via salvage pathway; XMP from xanthine: step 1/1. In terms of biological role, purine salvage pathway enzyme that catalyzes the transfer of the ribosyl-5-phosphate group from 5-phospho-alpha-D-ribose 1-diphosphate (PRPP) to the N9 position of the 6-oxopurines guanine and xanthine to form the corresponding ribonucleotides GMP (guanosine 5'-monophosphate) and XMP (xanthosine 5'-monophosphate), with the release of PPi. To a lesser extent, also acts on hypoxanthine. The chain is Xanthine-guanine phosphoribosyltransferase from Rhodopseudomonas palustris (strain BisB18).